Reading from the N-terminus, the 152-residue chain is Superoxide dismutase [Cu-Zn] (152 aa).

A lipid anchor (S-palmitoyl cysteine) is attached at Cys7. Residues His47, His49, and His64 each coordinate Cu cation. A disulfide bridge connects residues Cys58 and Cys146. The Zn(2+) site is built by His64, His72, His81, and Asp84. A Cu cation-binding site is contributed by His120.

This sequence belongs to the Cu-Zn superoxide dismutase family. Homodimer. Cu cation is required as a cofactor. It depends on Zn(2+) as a cofactor.

Its subcellular location is the cytoplasm. It localises to the nucleus. The catalysed reaction is 2 superoxide + 2 H(+) = H2O2 + O2. Destroys radicals which are normally produced within the cells and which are toxic to biological systems. This chain is Superoxide dismutase [Cu-Zn] (sod1), found in Xiphias gladius (Swordfish).